The primary structure comprises 177 residues: NADH-quinone oxidoreductase subunit B (177 aa).

Residues Cys56, Cys57, Cys121, and Cys151 each coordinate [4Fe-4S] cluster.

Belongs to the complex I 20 kDa subunit family. As to quaternary structure, NDH-1 is composed of 14 different subunits. Subunits NuoB, C, D, E, F, and G constitute the peripheral sector of the complex. The cofactor is [4Fe-4S] cluster.

It localises to the cell inner membrane. It carries out the reaction a quinone + NADH + 5 H(+)(in) = a quinol + NAD(+) + 4 H(+)(out). Functionally, NDH-1 shuttles electrons from NADH, via FMN and iron-sulfur (Fe-S) centers, to quinones in the respiratory chain. Couples the redox reaction to proton translocation (for every two electrons transferred, four hydrogen ions are translocated across the cytoplasmic membrane), and thus conserves the redox energy in a proton gradient. This Jannaschia sp. (strain CCS1) protein is NADH-quinone oxidoreductase subunit B.